An 853-amino-acid chain; its full sequence is FIGNL1-interacting regulator of recombination and mitosis (853 aa).

Residues Ser-43 and Ser-744 each carry the phosphoserine; by PLK1 modification. Residue Lys-792 is modified to N6-acetyllysine.

In terms of assembly, interacts (via its N-terminal region) with PLK1; controls PLK1 kinase activity. Interacts (via the KVVXF motif) with PPP1CC; controls PLK1 kinase activity. Interacts with FIGNL1; may regulate homologous recombination. In terms of processing, phosphorylation at Ser-43 by PLK1 strengthens FIRRM-PLK1 interaction. Phosphorylation at Ser-744 by PLK1 negatively regulates its interaction with PPP1CC.

The protein localises to the chromosome. It is found in the centromere. It localises to the kinetochore. Its subcellular location is the nucleus. The protein resides in the midbody. The protein localises to the cytoplasm. It is found in the cytoskeleton. It localises to the spindle. Regulates PLK1 kinase activity at kinetochores and promotes faithful chromosome segregation in prometaphase by bridging kinase and phosphatase activities. Phosphorylation of FIRRM by PLK1 negatively regulates its interaction with the phosphatase, PPP1CC, thus creating a negative feedback loop for maintaining proper PLK1 kinase activity during mitosis. In complex with FIGL1 may regulate homologous recombination. The protein is FIGNL1-interacting regulator of recombination and mitosis of Homo sapiens (Human).